The primary structure comprises 301 residues: ATP synthase gamma chain (301 aa).

It belongs to the ATPase gamma chain family. As to quaternary structure, F-type ATPases have 2 components, CF(1) - the catalytic core - and CF(0) - the membrane proton channel. CF(1) has five subunits: alpha(3), beta(3), gamma(1), delta(1), epsilon(1). CF(0) has three main subunits: a, b and c.

The protein localises to the cell inner membrane. Produces ATP from ADP in the presence of a proton gradient across the membrane. The gamma chain is believed to be important in regulating ATPase activity and the flow of protons through the CF(0) complex. The polypeptide is ATP synthase gamma chain (Helicobacter pylori (strain HPAG1)).